We begin with the raw amino-acid sequence, 126 residues long: Protein ApaG (126 aa).

In terms of domain architecture, ApaG spans 2–126 (SALDDSIRVE…FRLALPGLLH (125 aa)).

This chain is Protein ApaG, found in Shewanella sp. (strain ANA-3).